The sequence spans 264 residues: Ribosomal RNA small subunit methyltransferase A (264 aa).

S-adenosyl-L-methionine contacts are provided by His15, Leu17, Gly42, Glu63, Asp88, and Asn109.

The protein belongs to the class I-like SAM-binding methyltransferase superfamily. rRNA adenine N(6)-methyltransferase family. RsmA subfamily.

The protein localises to the cytoplasm. It carries out the reaction adenosine(1518)/adenosine(1519) in 16S rRNA + 4 S-adenosyl-L-methionine = N(6)-dimethyladenosine(1518)/N(6)-dimethyladenosine(1519) in 16S rRNA + 4 S-adenosyl-L-homocysteine + 4 H(+). Specifically dimethylates two adjacent adenosines (A1518 and A1519) in the loop of a conserved hairpin near the 3'-end of 16S rRNA in the 30S particle. May play a critical role in biogenesis of 30S subunits. This is Ribosomal RNA small subunit methyltransferase A from Nitrosococcus oceani (strain ATCC 19707 / BCRC 17464 / JCM 30415 / NCIMB 11848 / C-107).